The primary structure comprises 441 residues: Ribosomal protein uS12 methylthiotransferase RimO (441 aa).

Residues 8–118 (PKIGFVSLGC…VLEHVHHYSP (111 aa)) form the MTTase N-terminal domain. Positions 17, 53, 82, 150, 154, and 157 each coordinate [4Fe-4S] cluster. Residues 136–373 (LTPRHYAYLK…MQLQQQISAE (238 aa)) enclose the Radical SAM core domain. The TRAM domain maps to 376-441 (QEKVGREILV…DEYDLWGTRV (66 aa)).

This sequence belongs to the methylthiotransferase family. RimO subfamily. The cofactor is [4Fe-4S] cluster.

Its subcellular location is the cytoplasm. The enzyme catalyses L-aspartate(89)-[ribosomal protein uS12]-hydrogen + (sulfur carrier)-SH + AH2 + 2 S-adenosyl-L-methionine = 3-methylsulfanyl-L-aspartate(89)-[ribosomal protein uS12]-hydrogen + (sulfur carrier)-H + 5'-deoxyadenosine + L-methionine + A + S-adenosyl-L-homocysteine + 2 H(+). Catalyzes the methylthiolation of an aspartic acid residue of ribosomal protein uS12. The sequence is that of Ribosomal protein uS12 methylthiotransferase RimO from Klebsiella pneumoniae (strain 342).